The sequence spans 363 residues: DNA primase small subunit PriS (363 aa).

Active-site residues include Asp105, Asp107, and Asp265.

This sequence belongs to the eukaryotic-type primase small subunit family. In terms of assembly, heterodimer of a small subunit (PriS) and a large subunit (PriL). The cofactor is Mg(2+). It depends on Mn(2+) as a cofactor.

Catalytic subunit of DNA primase, an RNA polymerase that catalyzes the synthesis of short RNA molecules used as primers for DNA polymerase during DNA replication. The small subunit contains the primase catalytic core and has DNA synthesis activity on its own. Binding to the large subunit stabilizes and modulates the activity, increasing the rate of DNA synthesis while decreasing the length of the DNA fragments, and conferring RNA synthesis capability. The DNA polymerase activity may enable DNA primase to also catalyze primer extension after primer synthesis. May also play a role in DNA repair. The sequence is that of DNA primase small subunit PriS from Methanococcus maripaludis (strain C7 / ATCC BAA-1331).